Consider the following 213-residue polypeptide: Probable nicotinate-nucleotide adenylyltransferase (213 aa).

Belongs to the NadD family.

The catalysed reaction is nicotinate beta-D-ribonucleotide + ATP + H(+) = deamido-NAD(+) + diphosphate. It functions in the pathway cofactor biosynthesis; NAD(+) biosynthesis; deamido-NAD(+) from nicotinate D-ribonucleotide: step 1/1. In terms of biological role, catalyzes the reversible adenylation of nicotinate mononucleotide (NaMN) to nicotinic acid adenine dinucleotide (NaAD). This Salmonella gallinarum (strain 287/91 / NCTC 13346) protein is Probable nicotinate-nucleotide adenylyltransferase.